A 372-amino-acid polypeptide reads, in one-letter code: Glutamate 5-kinase (372 aa).

An ATP-binding site is contributed by lysine 14. Residues serine 54, aspartate 141, and asparagine 153 each coordinate substrate. ATP-binding positions include 173-174 and 215-221; these read TD and TGGMATK. The 79-residue stretch at 280 to 358 folds into the PUA domain; the sequence is KGKLVLDVGA…DEIESLLGYD (79 aa).

Belongs to the glutamate 5-kinase family.

The protein resides in the cytoplasm. It carries out the reaction L-glutamate + ATP = L-glutamyl 5-phosphate + ADP. It participates in amino-acid biosynthesis; L-proline biosynthesis; L-glutamate 5-semialdehyde from L-glutamate: step 1/2. Catalyzes the transfer of a phosphate group to glutamate to form L-glutamate 5-phosphate. This is Glutamate 5-kinase from Shewanella woodyi (strain ATCC 51908 / MS32).